The primary structure comprises 468 residues: Microtubule-associated tyrosine carboxypeptidase 1 (468 aa).

The span at 1–10 (MVLDSGTQVY) shows a compositional bias: polar residues. 2 disordered regions span residues 1–39 (MVLDSGTQVYEQAPPSPPASSPSQHHKLKPSNRNGPPLY) and 77–112 (MKRSESTYSVNSTGRRGRGKAPLGRGCDPGGGTLRP). Residue His277 coordinates Zn(2+). Glu278 acts as the Nucleophile in catalysis. Zn(2+)-binding residues include His282 and Glu313.

This sequence belongs to the peptidase MATCAP family. Zn(2+) serves as cofactor.

It localises to the cytoplasm. The protein resides in the cytoskeleton. The enzyme catalyses C-terminal L-alpha-aminoacyl-L-glutamyl-L-glutamyl-L-tyrosyl-[tubulin] + H2O = C-terminal L-alpha-aminoacyl-L-glutamyl-L-glutamyl-[tubulin] + L-tyrosine. It catalyses the reaction C-terminal L-alpha-aminoacyl-L-glutamyl-L-glutamyl-L-phenylalanyl-[tubulin] + H2O = C-terminal L-alpha-aminoacyl-L-glutamyl-L-glutamyl-[tubulin] + L-phenylalanine. Tyrosine carboxypeptidase that removes the C-terminal tyrosine residue of alpha-tubulin, thereby regulating microtubule dynamics and function. Also able to remove the C-terminal phenylalanine residue of alpha-tubulin TUBA8. Recognizes adjacent tubulin dimers along the same protofilament. The chain is Microtubule-associated tyrosine carboxypeptidase 1 from Rattus norvegicus (Rat).